A 315-amino-acid polypeptide reads, in one-letter code: Ribosomal RNA small subunit methyltransferase H (315 aa).

S-adenosyl-L-methionine contacts are provided by residues 61–63 (GGH), D80, F108, D124, and Q131. Residues 291–315 (PQPEEEEKNPRSRSAKLRFAQRKPL) are disordered. The segment covering 301–315 (RSRSAKLRFAQRKPL) has biased composition (basic residues).

The protein belongs to the methyltransferase superfamily. RsmH family.

The protein localises to the cytoplasm. The enzyme catalyses cytidine(1402) in 16S rRNA + S-adenosyl-L-methionine = N(4)-methylcytidine(1402) in 16S rRNA + S-adenosyl-L-homocysteine + H(+). Specifically methylates the N4 position of cytidine in position 1402 (C1402) of 16S rRNA. This Crocosphaera subtropica (strain ATCC 51142 / BH68) (Cyanothece sp. (strain ATCC 51142)) protein is Ribosomal RNA small subunit methyltransferase H.